Consider the following 154-residue polypeptide: SsrA-binding protein (154 aa).

This sequence belongs to the SmpB family.

Its subcellular location is the cytoplasm. Its function is as follows. Required for rescue of stalled ribosomes mediated by trans-translation. Binds to transfer-messenger RNA (tmRNA), required for stable association of tmRNA with ribosomes. tmRNA and SmpB together mimic tRNA shape, replacing the anticodon stem-loop with SmpB. tmRNA is encoded by the ssrA gene; the 2 termini fold to resemble tRNA(Ala) and it encodes a 'tag peptide', a short internal open reading frame. During trans-translation Ala-aminoacylated tmRNA acts like a tRNA, entering the A-site of stalled ribosomes, displacing the stalled mRNA. The ribosome then switches to translate the ORF on the tmRNA; the nascent peptide is terminated with the 'tag peptide' encoded by the tmRNA and targeted for degradation. The ribosome is freed to recommence translation, which seems to be the essential function of trans-translation. This is SsrA-binding protein from Ruminiclostridium cellulolyticum (strain ATCC 35319 / DSM 5812 / JCM 6584 / H10) (Clostridium cellulolyticum).